A 653-amino-acid chain; its full sequence is Chaperone protein dnaK3 (653 aa).

Threonine 197 is modified (phosphothreonine; by autocatalysis).

Belongs to the heat shock protein 70 family.

In terms of biological role, acts as a chaperone. This is Chaperone protein dnaK3 (dnaK3) from Nostoc sp. (strain PCC 7120 / SAG 25.82 / UTEX 2576).